The sequence spans 420 residues: uncharacterized protein (420 aa).

Belongs to the mimivirus R160 family.

It localises to the virion. This is an uncharacterized protein from Acanthamoeba polyphaga mimivirus (APMV).